The chain runs to 55 residues: Large ribosomal subunit protein bL33 (55 aa).

It belongs to the bacterial ribosomal protein bL33 family.

The protein is Large ribosomal subunit protein bL33 of Roseobacter denitrificans (strain ATCC 33942 / OCh 114) (Erythrobacter sp. (strain OCh 114)).